The sequence spans 380 residues: Tryptophan 2,3-dioxygenase (380 aa).

Substrate-binding positions include 57–61 and Arg128; that span reads FIITH. His313 is a binding site for heme. A substrate-binding site is contributed by Thr328.

The protein belongs to the tryptophan 2,3-dioxygenase family. In terms of assembly, homotetramer. Dimer of dimers. Heme is required as a cofactor.

The catalysed reaction is L-tryptophan + O2 = N-formyl-L-kynurenine. Its pathway is amino-acid degradation; L-tryptophan degradation via kynurenine pathway; L-kynurenine from L-tryptophan: step 1/2. It participates in pigment biosynthesis; ommochrome biosynthesis. Functionally, heme-dependent dioxygenase that catalyzes the oxidative cleavage of the L-tryptophan (L-Trp) pyrrole ring and converts L-tryptophan to N-formyl-L-kynurenine. Catalyzes the oxidative cleavage of the indole moiety. This Drosophila persimilis (Fruit fly) protein is Tryptophan 2,3-dioxygenase.